We begin with the raw amino-acid sequence, 178 residues long: Ribosome maturation factor RimM (178 aa).

The PRC barrel domain occupies 100–173 (ADEYFIHQLY…QIVVRLLPGL (74 aa)).

It belongs to the RimM family. As to quaternary structure, binds ribosomal protein uS19.

The protein localises to the cytoplasm. In terms of biological role, an accessory protein needed during the final step in the assembly of 30S ribosomal subunit, possibly for assembly of the head region. Essential for efficient processing of 16S rRNA. May be needed both before and after RbfA during the maturation of 16S rRNA. It has affinity for free ribosomal 30S subunits but not for 70S ribosomes. The sequence is that of Ribosome maturation factor RimM from Roseiflexus castenholzii (strain DSM 13941 / HLO8).